Reading from the N-terminus, the 294-residue chain is MNDALKTYLTGIGWFLLSLVSSSANDVMSKYLGTRLHSFEVAFFRFFFSSIVLLPFVFYHGKNTLKTSRPFVHILRGLLLFFGMTSWTYGLTIAPVTTATVVSFSIPLFTLILAVFFLNENIIWQRWVVTVVGFIGLVVTLKPHTEDFNPEILYFVLAAISFAMLDIINKKFVIKESMISMLFYSAIVTAVVSLPVASQYWLTPSGFELALLFVLGSSGSLILFFLLKAFSMVDATATAPYRYLELVISAIAAYFIFSEFPDKSTLHGAVIIIPATLFIIYSEKKAMSRKHESQ.

10 helical membrane-spanning segments follow: residues 4 to 24 (ALKT…SSSA), 39 to 59 (FEVA…FVFY), 74 to 91 (ILRG…TYGL), 98 to 118 (TATV…VFFL), 121 to 141 (NIIW…VVTL), 148 to 168 (FNPE…LDII), 177 to 197 (SMIS…LPVA), 207 to 227 (FELA…FFLL), 237 to 257 (ATAP…YFIF), and 260 to 280 (FPDK…LFII). 2 consecutive EamA domains span residues 21–141 (SSSA…VVTL) and 160–280 (ISFA…LFII).

The protein belongs to the drug/metabolite transporter (DMT) superfamily. 10 TMS drug/metabolite exporter (DME) (TC 2.A.7.3) family.

It is found in the cell inner membrane. In terms of biological role, transports S-adenosylmethionine. The sequence is that of S-adenosylmethionine uptake transporter (sam) from Rickettsia felis (strain ATCC VR-1525 / URRWXCal2) (Rickettsia azadi).